An 824-amino-acid chain; its full sequence is 4-methylaminobutanoate oxidase (formaldehyde-forming) (824 aa).

At His67 the chain carries Pros-8alpha-FAD histidine.

This sequence belongs to the GcvT family. FAD is required as a cofactor.

The enzyme catalyses 4-(methylamino)butanoate + O2 + H2O = 4-aminobutanoate + formaldehyde + H2O2. Its pathway is alkaloid degradation; nicotine degradation. Its function is as follows. Catalyzes the oxidative demethylation of 4-methylaminobutanoate produced from the pyrrolidine ring of nicotine. To a much lesser extent, can also use sarcosine as substrate, but is not active against dimethylglycine, methylaminopropionitrile, methylaminopropylamine, and alpha-methylaminobutanoate. This is 4-methylaminobutanoate oxidase (formaldehyde-forming) (abo) from Paenarthrobacter nicotinovorans (Arthrobacter nicotinovorans).